Here is a 210-residue protein sequence, read N- to C-terminus: ATP-dependent Clp protease proteolytic subunit (210 aa).

The Nucleophile role is filled by Ser114. His139 is a catalytic residue.

Belongs to the peptidase S14 family. As to quaternary structure, fourteen ClpP subunits assemble into 2 heptameric rings which stack back to back to give a disk-like structure with a central cavity, resembling the structure of eukaryotic proteasomes.

It is found in the cytoplasm. The enzyme catalyses Hydrolysis of proteins to small peptides in the presence of ATP and magnesium. alpha-casein is the usual test substrate. In the absence of ATP, only oligopeptides shorter than five residues are hydrolyzed (such as succinyl-Leu-Tyr-|-NHMec, and Leu-Tyr-Leu-|-Tyr-Trp, in which cleavage of the -Tyr-|-Leu- and -Tyr-|-Trp bonds also occurs).. In terms of biological role, cleaves peptides in various proteins in a process that requires ATP hydrolysis. Has a chymotrypsin-like activity. Plays a major role in the degradation of misfolded proteins. This chain is ATP-dependent Clp protease proteolytic subunit, found in Janthinobacterium sp. (strain Marseille) (Minibacterium massiliensis).